Reading from the N-terminus, the 284-residue chain is MKRRVETITFDGGTLEYSVTGKGTPILVMHGGHSNCYEEFGYTALIEQGYSIITPSRPGYGRTSKEIGKSLANACRFYVKLLDHLQIESVHVIAISAGGPSGICFASHYPERVNTLTLQSAVTKEWLTPKDTEYKLGEILFRPPVEKWIWKLISSLNNAFPRLMFRAMSPQFSTLPFQRIKSLMNEKDIEAFRKMNSRQRSGEGFLIDLSQTAAVSLKDLQAIICPVLIMQSVYDGLVDLSHAHHAKEHIRGAVLCLLHSWGHLIWLGKEAAETGSILLGFLES.

The AB hydrolase-1 domain occupies 25 to 123; it reads PILVMHGGHS…NTLTLQSAVT (99 aa). The active site involves Ser-96.

Belongs to the AB hydrolase superfamily.

This is an uncharacterized protein from Bacillus subtilis (strain 168).